The chain runs to 312 residues: Putative endo-1,4-beta-xylanase (312 aa).

The 301-residue stretch at 1–301 (MKQQYLLDYE…KPCFYSFLQA (301 aa)) folds into the GH10 domain. E104 acts as the Proton donor in catalysis. E216 serves as the catalytic Nucleophile.

The protein belongs to the glycosyl hydrolase 10 (cellulase F) family.

It carries out the reaction Endohydrolysis of (1-&gt;4)-beta-D-xylosidic linkages in xylans.. The protein operates within glycan degradation; xylan degradation. In terms of biological role, could be a xylanase. This is Putative endo-1,4-beta-xylanase from Caldicellulosiruptor saccharolyticus (Caldocellum saccharolyticum).